We begin with the raw amino-acid sequence, 542 residues long: 1,3-beta-glucanosyltransferase gas1 (542 aa).

Residues 1-19 (MKFSILSLAVAGLVGLAKA) form the signal peptide. N-linked (GlcNAc...) asparagine glycosylation occurs at N35. A disulfide bond links C70 and C99. Y88 contacts (1,3-beta-D-glucosyl)n. Residue N91 is glycosylated (N-linked (GlcNAc...) asparagine). Residues N156 and E157 each contribute to the (1,3-beta-D-glucosyl)n site. Catalysis depends on E157, which acts as the Proton donor. A glycan (N-linked (GlcNAc...) asparagine) is linked at N161. Residues D198 and R203 each coordinate (1,3-beta-D-glucosyl)n. 5 disulfide bridges follow: C212-C345, C230-C261, C367-C419, C376-C439, and C395-C400. The N-linked (GlcNAc...) asparagine glycan is linked to N249. The Nucleophile role is filled by E258. N279 carries N-linked (GlcNAc...) asparagine glycosylation. A (1,3-beta-D-glucosyl)n-binding site is contributed by Y290. 4 N-linked (GlcNAc...) asparagine glycosylation sites follow: N406, N484, N502, and N509. The segment at 490–515 (MSTSYTSGSGSSNSSGSSSNSSSKSS) is disordered. S516 carries GPI-anchor amidated serine lipidation. Residues 517 to 542 (GASSYNLNMVITFLSVVIGGTAVLFI) constitute a propeptide, removed in mature form.

This sequence belongs to the glycosyl hydrolase 72 family. The GPI-anchor is attached to the protein in the endoplasmic reticulum and serves to target the protein to the cell surface. There, the glucosamine-inositol phospholipid moiety is cleaved off and the GPI-modified mannoprotein is covalently attached via its lipidless GPI glycan remnant to the 1,6-beta-glucan of the outer cell wall layer.

The protein resides in the secreted. The protein localises to the cell wall. It is found in the membrane. Functionally, splits internally a 1,3-beta-glucan molecule and transfers the newly generated reducing end (the donor) to the non-reducing end of another 1,3-beta-glucan molecule (the acceptor) forming a 1,3-beta linkage, resulting in the elongation of 1,3-beta-glucan chains in the cell wall. This Schizosaccharomyces pombe (strain 972 / ATCC 24843) (Fission yeast) protein is 1,3-beta-glucanosyltransferase gas1 (gas1).